A 243-amino-acid chain; its full sequence is Vesicle-associated membrane protein-associated protein B/C (243 aa).

An N-acetylalanine modification is found at alanine 2. The Cytoplasmic portion of the chain corresponds to 2–222 (AKVEQVLSLE…PTGKEEGLST (221 aa)). The region spanning 7 to 124 (VLSLEPQHEL…MDSKLRCVFE (118 aa)) is the MSP domain. Serine 146 bears the Phosphoserine mark. A Glycyl lysine isopeptide (Lys-Gly) (interchain with G-Cter in SUMO1) cross-link involves residue lysine 147. Threonine 150 carries the post-translational modification Phosphothreonine. A phosphoserine mark is found at serine 156, serine 158, serine 159, serine 160, and serine 206. A coiled-coil region spans residues 159–196 (SSLDDTEVKKVMEECKRLQGEVQRLREENKQFKEEDGL). The chain crosses the membrane as a helical; Anchor for type IV membrane protein span at residues 223 to 243 (RLLALVVLFFIVGVIIGKIAL).

Belongs to the VAMP-associated protein (VAP) (TC 9.B.17) family. In terms of assembly, homodimer, and heterodimer with VAPA. Interacts with VAMP1 and VAMP2. Interacts (via MSP domain) with ZFYVE27. Interacts with RMDN3. Interacts with KIF5A in a ZFYVE27-dependent manner. Interacts (via MSP domain) with STARD3 (via phospho-FFAT motif). Interacts with STARD3NL (via FFAT motif). Interacts with CERT1. Interacts with PLEKHA3 and SACM1L to form a ternary complex. Interacts with VPS13A (via FFAT motif). Interacts with RB1CC1 (via phosphorylated FFAT motif), MIGA2 (via phosphorylated FFAT motif), RMDN3 (via phosphorylated FFAT motif), OSBPL1A (via FFAT motif), KCNB1 (via phosphorylated FFAT motif) and KCNB2 (via phosphorylated FFAT motif). Interacts (via MSP domain) with WDR44 (via FFAT motif); the interactions connect the endoplasmic reticulum (ER) with the endosomal tubule. (Microbial infection) Interacts (via MSP domain) with hepatitis C virus (HCV) non-structural protein 5A (via disordered domain D3). Interacts with HCV RNA-directed RNA polymerase. In terms of tissue distribution, ubiquitous. Isoform 1 predominates.

Its subcellular location is the endoplasmic reticulum membrane. In terms of biological role, endoplasmic reticulum (ER)-anchored protein that mediates the formation of contact sites between the ER and endosomes via interaction with FFAT motif-containing proteins such as STARD3 or WDR44. Interacts with STARD3 in a FFAT motif phosphorylation dependent manner. Via interaction with WDR44 participates in neosynthesized protein export. Participates in the endoplasmic reticulum unfolded protein response (UPR) by inducing ERN1/IRE1 activity. Involved in cellular calcium homeostasis regulation. The sequence is that of Vesicle-associated membrane protein-associated protein B/C from Homo sapiens (Human).